The sequence spans 419 residues: Tol-Pal system protein TolB (419 aa).

Positions 1–19 (MFNRIISLFLLLFTGQVIA) are cleaved as a signal peptide.

The protein belongs to the TolB family. In terms of assembly, the Tol-Pal system is composed of five core proteins: the inner membrane proteins TolA, TolQ and TolR, the periplasmic protein TolB and the outer membrane protein Pal. They form a network linking the inner and outer membranes and the peptidoglycan layer.

It is found in the periplasm. In terms of biological role, part of the Tol-Pal system, which plays a role in outer membrane invagination during cell division and is important for maintaining outer membrane integrity. This is Tol-Pal system protein TolB from Legionella pneumophila (strain Corby).